The chain runs to 389 residues: Probable L-tyrosine/L-aspartate decarboxylase (389 aa).

Lys233 is modified (N6-(pyridoxal phosphate)lysine).

Belongs to the group II decarboxylase family. MfnA subfamily. Requires pyridoxal 5'-phosphate as cofactor.

The catalysed reaction is L-tyrosine + H(+) = tyramine + CO2. It carries out the reaction L-aspartate + H(+) = beta-alanine + CO2. The protein operates within cofactor biosynthesis; methanofuran biosynthesis. It participates in cofactor biosynthesis; coenzyme A biosynthesis. Its function is as follows. Catalyzes the decarboxylation of L-tyrosine to produce tyramine for methanofuran biosynthesis. Can also catalyze the decarboxylation of L-aspartate to produce beta-alanine for coenzyme A (CoA) biosynthesis. This is Probable L-tyrosine/L-aspartate decarboxylase from Methanosphaera stadtmanae (strain ATCC 43021 / DSM 3091 / JCM 11832 / MCB-3).